We begin with the raw amino-acid sequence, 148 residues long: Large-conductance mechanosensitive channel (148 aa).

2 consecutive transmembrane segments (helical) span residues 12-32 (AFAM…GGAF) and 85-105 (GQFL…FLFI).

This sequence belongs to the MscL family. As to quaternary structure, homopentamer.

It is found in the cell inner membrane. Channel that opens in response to stretch forces in the membrane lipid bilayer. May participate in the regulation of osmotic pressure changes within the cell. The chain is Large-conductance mechanosensitive channel from Bacteroides thetaiotaomicron (strain ATCC 29148 / DSM 2079 / JCM 5827 / CCUG 10774 / NCTC 10582 / VPI-5482 / E50).